The following is a 444-amino-acid chain: Mitogen-activated protein kinase mpk-1 (444 aa).

Composition is skewed to polar residues over residues 1 to 17 (MPTWIPNNLCAQPTTRN) and 24 to 56 (GHPQATQQQSAPGSLAYRNSSNIPNGATNHVRQ). Residues 1–56 (MPTWIPNNLCAQPTTRNAKPPSNGHPQATQQQSAPGSLAYRNSSNIPNGATNHVRQ) form a disordered region. In terms of domain architecture, Protein kinase spans 96-384 (YVNLSYIGEG…IEQALAHPYL (289 aa)). ATP-binding positions include 102–110 (IGEGAYGMV) and Lys-125. Asp-220 serves as the catalytic Proton acceptor. Thr-256 carries the phosphothreonine modification. The TXY signature appears at 256–258 (TEY). A Phosphotyrosine modification is found at Tyr-258.

This sequence belongs to the protein kinase superfamily. CMGC Ser/Thr protein kinase family. MAP kinase subfamily. Isoform a interacts with gck-1 (via N-terminus). The cofactor is Mg(2+). In terms of processing, isoform a is phosphorylated at the pachytene stage during oogenesis and is negatively regulated by gck-1. Isoform b is phosphorylated in proximal oocytes. Expressed in cells lining the rectum. Isoform a is expressed in nervous system, body wall muscles and posterior intestine. Isoform b expression may be restricted to germline.

It carries out the reaction L-seryl-[protein] + ATP = O-phospho-L-seryl-[protein] + ADP + H(+). The enzyme catalyses L-threonyl-[protein] + ATP = O-phospho-L-threonyl-[protein] + ADP + H(+). Its activity is regulated as follows. Activated by dual phosphorylation at Thr-256 and Tyr-258. May be inactivated by lip-1-mediated dephosphorylation. Functionally, functions in let-60 Ras signaling pathway; acts downstream of lin-45 raf kinase, but before the lin-1 gene product in controlling vulval cell differentiation. Plays a negative role in proximal germline proliferation in the mitotic zone. Required for progression of developing oocytes through the pachytene stage, perhaps acting after efl-1/dpl-1-mediated gene activation and before gld-1 down-regulation. May play a role in global X chromosome reactivation or be indirectly required for progression of germ cells through meiosis to the point where X reactivation occurs. In oocytes, inhibits the activity of the chloride channel clh-3, likely by activating gck-3. Plays a role in response to M.nematophilum-mediated bacterial infection by promoting tail swelling and preventing constipation. Involved in fluid homeostasis. In addition, involved in the up-regulation of lysozyme ilys-3 expression in the intestine in responses to M.nematophilum-mediated bacterial infection. By phosphorylating transcription factor skn-1 (isoform c) may play a role in increasing life span downstream of lin-45, let-60 and mek-2. By up-regulating cep-1 and down-regulating gld-1 expression in the late pachytene stage, plays a role in germline apoptosis in response to DNA damage. Regulates egl-1 expression in response to DNA damage, probably upstream of cep-1. In terms of biological role, suppresses germline tumor formation by preventing the dedifferentiation of secondary spermatocytes probably upstream of rskn-1. In Caenorhabditis elegans, this protein is Mitogen-activated protein kinase mpk-1 (mpk-1).